A 251-amino-acid polypeptide reads, in one-letter code: MSDHKPAGQFLDAAIDLLRRVRDEEADSIEAAGTLLADTVQNGGRLFAFGAGHSSLAAQDVVYRAGGLALMNLLTVPGVVGIDVMPATLGSALERVDGLASAVLDSSPLRAGDALVIISLSGRNALPVEMAMHARALGLRVIGVTSVAYASQTTSRHASGTFLKDHCDIVLDSKIAVGDAELTLDTVPAPFAPASTVVTAALMQAVTATAAATLADRGIEPPLLRSGNVDGGHEWNARVLEQYGERIFYRR.

The SIS domain maps to 36–220; the sequence is LADTVQNGGR…AATLADRGIE (185 aa).

Belongs to the UPF0309 family.

In Streptomyces coelicolor (strain ATCC BAA-471 / A3(2) / M145), this protein is UPF0309 protein SCO4393.